Reading from the N-terminus, the 130-residue chain is Small ribosomal subunit protein uS9 (130 aa).

This sequence belongs to the universal ribosomal protein uS9 family.

This is Small ribosomal subunit protein uS9 from Bacillus cytotoxicus (strain DSM 22905 / CIP 110041 / 391-98 / NVH 391-98).